The chain runs to 410 residues: Argininosuccinate synthase (410 aa).

ATP is bound at residue 8-16 (AYSGGLDTS). Tyrosine 86 serves as a coordination point for L-citrulline. Glycine 116 is an ATP binding site. The L-aspartate site is built by threonine 118, asparagine 122, and aspartate 123. Asparagine 122 is an L-citrulline binding site. 4 residues coordinate L-citrulline: arginine 126, serine 174, glutamate 259, and tyrosine 271.

Belongs to the argininosuccinate synthase family. Type 1 subfamily. Homotetramer.

The protein resides in the cytoplasm. The catalysed reaction is L-citrulline + L-aspartate + ATP = 2-(N(omega)-L-arginino)succinate + AMP + diphosphate + H(+). Its pathway is amino-acid biosynthesis; L-arginine biosynthesis; L-arginine from L-ornithine and carbamoyl phosphate: step 2/3. In Leuconostoc citreum (strain KM20), this protein is Argininosuccinate synthase.